Reading from the N-terminus, the 280-residue chain is Pantothenate synthetase (280 aa).

Residue 30 to 37 coordinates ATP; it reads MGYLHEGH. The active-site Proton donor is the H37. A (R)-pantoate-binding site is contributed by Q61. A beta-alanine-binding site is contributed by Q61. 147-150 is an ATP binding site; it reads GQKD. Position 153 (Q153) interacts with (R)-pantoate. ATP-binding positions include V176 and 184–187; that span reads MSSR.

It belongs to the pantothenate synthetase family. In terms of assembly, homodimer.

The protein localises to the cytoplasm. It carries out the reaction (R)-pantoate + beta-alanine + ATP = (R)-pantothenate + AMP + diphosphate + H(+). It participates in cofactor biosynthesis; (R)-pantothenate biosynthesis; (R)-pantothenate from (R)-pantoate and beta-alanine: step 1/1. In terms of biological role, catalyzes the condensation of pantoate with beta-alanine in an ATP-dependent reaction via a pantoyl-adenylate intermediate. This Fervidobacterium nodosum (strain ATCC 35602 / DSM 5306 / Rt17-B1) protein is Pantothenate synthetase.